The following is a 117-amino-acid chain: Glycine cleavage system H-like protein (117 aa).

The Lipoyl-binding domain occupies 21 to 103 (IVRLGLSSRM…ESEGWFVVLQ (83 aa)). An N6-lipoyllysine modification is found at Lys-62.

This sequence belongs to the GcvH family. Requires (R)-lipoate as cofactor.

In Chlamydia muridarum (strain MoPn / Nigg), this protein is Glycine cleavage system H-like protein.